A 62-amino-acid polypeptide reads, in one-letter code: Large ribosomal subunit protein uL30 (62 aa).

It belongs to the universal ribosomal protein uL30 family. In terms of assembly, part of the 50S ribosomal subunit.

This Marinobacter nauticus (strain ATCC 700491 / DSM 11845 / VT8) (Marinobacter aquaeolei) protein is Large ribosomal subunit protein uL30.